Here is an 883-residue protein sequence, read N- to C-terminus: Depolymerase, capsule K63-specific (883 aa).

Residues 137-157 show a composition bias toward low complexity; it reads AAAAAASENAAKTSENNAKSS. The tract at residues 137-161 is disordered; sequence AAAAAASENAAKTSENNAKSSEVAA.

The protein in the N-terminal section; belongs to the Webervirus depolymerase family. In the C-terminal section; belongs to the K63-specific depolymerase family. As to quaternary structure, homotrimer.

The protein localises to the virion. In terms of biological role, functions as a receptor binding protein (RBP) and probably mediates the attachment to the host capsular exopolysaccharides. Displays a depolymerase activity that specifically degrades the K63-type polysaccharides of Klebsiella pneumoniae capsule, which allows the phage to reach the host cell membrane and bind the entry receptor. This chain is Depolymerase, capsule K63-specific, found in Klebsiella phage KP36 (Bacteriophage KP36).